The sequence spans 311 residues: Avirulence protein ATR1 (311 aa).

The first 15 residues, 1 to 15 (MRVCYFVLVPSVALA), serve as a signal peptide directing secretion. Positions 48–62 (RALRAQTALDDDEER) match the RxLR-dEER motif. WY domain regions lie at residues 127-209 (DEAL…VKCV) and 210-311 (ESED…IYSV).

It belongs to the RxLR effector family. Monomer. Interacts with defense protein RPP1 from several ecotypes including RPP1-NdA, RPP1-WsB, RPP1-EstA and RPP1-ZdrA, via their leucine-rich repeats (LLRs).

It localises to the secreted. Its subcellular location is the host cytoplasm. In terms of biological role, secreted effector that acts as an elicitor of hypersensitive response (HR) specifically on plants carrying both defense protein RPP1 from several ecotypes including RPP1-NdA, RPP1-WsB, RPP1-EstA and RPP1-ZdrA. The polypeptide is Avirulence protein ATR1 (Hyaloperonospora arabidopsidis (strain Emoy2) (Downy mildew agent)).